Consider the following 403-residue polypeptide: Chromatin structure-remodeling complex subunit rsc58 (403 aa).

A compositionally biased stretch (low complexity) spans 376-389 (SLSMNGSLSPSSTN). The segment at 376–403 (SLSMNGSLSPSSTNVPLQSYRRTTKSRR) is disordered. Position 384 is a phosphoserine (S384).

As to quaternary structure, component of the RSC complex composed of at least arp9, arp42, rsc1, rsc4, rsc7, rsc9, rsc58, sfh1, snf21, ssr1, ssr2, ssr3 and ssr4. The complex interacts with histone and histone variant components of centromeric chromatin.

The protein resides in the cytoplasm. It is found in the nucleus. Component of the chromatin structure remodeling complex (RSC), which is involved in transcription regulation and nucleosome positioning. Controls particularly membrane and organelle development genes. In Schizosaccharomyces pombe (strain 972 / ATCC 24843) (Fission yeast), this protein is Chromatin structure-remodeling complex subunit rsc58 (rsc58).